Here is a 143-residue protein sequence, read N- to C-terminus: Actin-depolymerizing factor (143 aa).

Residues 11–143 (GMGVADHSKN…DLEVLRERAH (133 aa)) form the ADF-H domain.

This sequence belongs to the actin-binding proteins ADF family.

Functionally, actin-depolymerizing protein. Severs actin filaments (F-actin) and binds to actin monomers. In Vitis vinifera (Grape), this protein is Actin-depolymerizing factor.